The chain runs to 584 residues: Nif-specific regulatory protein (584 aa).

The tract at residues 1–24 (MTHMPARPVDGAEPLSALPAGPMR) is disordered. Residues 45-187 (RLEITLANVV…MVANLVSRTI (143 aa)) form the GAF domain. A Sigma-54 factor interaction domain is found at 229–457 (IIGDSPALQQ…LENCVRRTAT (229 aa)). ATP is bound by residues 257–264 (GESGTGKE) and 320–329 (ANGGTLLLDE). The inter-domain linker stretch occupies residues 458–541 (LARSSSIVSS…CPAMESRLTQ (84 aa)). A divalent metal cation is bound by residues Cys471 and Cys476. The tract at residues 495 to 518 (GHARSNVMPTSSPRSGGSIGASDE) is disordered. Residues 542–584 (RDRLIEAMEKAGWVQAKAARILGLTPRQVGYALRQHRIEVKKL) are C-terminal DNA-binding domain. Residues 556–575 (QAKAARILGLTPRQVGYALR) constitute a DNA-binding region (H-T-H motif).

In terms of assembly, interacts with sigma-54.

In terms of biological role, required for activation of most nif operons, which are directly involved in nitrogen fixation. This is Nif-specific regulatory protein (nifA) from Rhizobium etli (strain ATCC 51251 / DSM 11541 / JCM 21823 / NBRC 15573 / CFN 42).